A 202-amino-acid chain; its full sequence is Probable nicotinate-nucleotide adenylyltransferase (202 aa).

This sequence belongs to the NadD family.

It carries out the reaction nicotinate beta-D-ribonucleotide + ATP + H(+) = deamido-NAD(+) + diphosphate. It functions in the pathway cofactor biosynthesis; NAD(+) biosynthesis; deamido-NAD(+) from nicotinate D-ribonucleotide: step 1/1. Catalyzes the reversible adenylation of nicotinate mononucleotide (NaMN) to nicotinic acid adenine dinucleotide (NaAD). In Synechococcus sp. (strain JA-2-3B'a(2-13)) (Cyanobacteria bacterium Yellowstone B-Prime), this protein is Probable nicotinate-nucleotide adenylyltransferase.